The primary structure comprises 456 residues: Bifunctional protein GlmU (456 aa).

A pyrophosphorylase region spans residues 1–229 (MLNSAMSVVI…ISETDGVNNR (229 aa)). Residues 11–14 (LAAG), Lys25, Gln76, 81–82 (GT), 103–105 (YGD), Gly140, Glu154, Asn169, and Asn227 contribute to the UDP-N-acetyl-alpha-D-glucosamine site. Asp105 contributes to the Mg(2+) binding site. Asn227 contributes to the Mg(2+) binding site. The linker stretch occupies residues 230-250 (LQLSRLERIYQAEQAEKLLLS). The N-acetyltransferase stretch occupies residues 251-456 (GVMLRDPARF…QGWQRPVKKK (206 aa)). UDP-N-acetyl-alpha-D-glucosamine is bound by residues Arg333 and Lys351. His363 serves as the catalytic Proton acceptor. 2 residues coordinate UDP-N-acetyl-alpha-D-glucosamine: Tyr366 and Asn377. Residues Ala380, 386 to 387 (NY), Ser405, Ala423, and Arg440 each bind acetyl-CoA.

This sequence in the N-terminal section; belongs to the N-acetylglucosamine-1-phosphate uridyltransferase family. It in the C-terminal section; belongs to the transferase hexapeptide repeat family. Homotrimer. It depends on Mg(2+) as a cofactor.

Its subcellular location is the cytoplasm. The catalysed reaction is alpha-D-glucosamine 1-phosphate + acetyl-CoA = N-acetyl-alpha-D-glucosamine 1-phosphate + CoA + H(+). It carries out the reaction N-acetyl-alpha-D-glucosamine 1-phosphate + UTP + H(+) = UDP-N-acetyl-alpha-D-glucosamine + diphosphate. It functions in the pathway nucleotide-sugar biosynthesis; UDP-N-acetyl-alpha-D-glucosamine biosynthesis; N-acetyl-alpha-D-glucosamine 1-phosphate from alpha-D-glucosamine 6-phosphate (route II): step 2/2. Its pathway is nucleotide-sugar biosynthesis; UDP-N-acetyl-alpha-D-glucosamine biosynthesis; UDP-N-acetyl-alpha-D-glucosamine from N-acetyl-alpha-D-glucosamine 1-phosphate: step 1/1. It participates in bacterial outer membrane biogenesis; LPS lipid A biosynthesis. Functionally, catalyzes the last two sequential reactions in the de novo biosynthetic pathway for UDP-N-acetylglucosamine (UDP-GlcNAc). The C-terminal domain catalyzes the transfer of acetyl group from acetyl coenzyme A to glucosamine-1-phosphate (GlcN-1-P) to produce N-acetylglucosamine-1-phosphate (GlcNAc-1-P), which is converted into UDP-GlcNAc by the transfer of uridine 5-monophosphate (from uridine 5-triphosphate), a reaction catalyzed by the N-terminal domain. The polypeptide is Bifunctional protein GlmU (Salmonella dublin (strain CT_02021853)).